Consider the following 393-residue polypeptide: High mobility group protein DSP1 (393 aa).

The segment at 153-179 (QMQQQQQQQNVINSASPMSRVKADAKP) is disordered. 2 DNA-binding regions (HMG box) span residues 179 to 249 (PRGR…QNYV) and 271 to 339 (PKRS…TEYK). Low complexity predominate over residues 364–374 (LLAAAAQQQHQ). The interval 364–393 (LLAAAAQQQHQQLEEQHDDDDGDGDDDENQ) is disordered. A compositionally biased stretch (acidic residues) spans 379-393 (QHDDDDGDGDDDENQ).

This sequence belongs to the HMGB family.

It localises to the nucleus. It is found in the chromosome. Binds preferentially single-stranded DNA and unwinds double-stranded DNA. In Drosophila melanogaster (Fruit fly), this protein is High mobility group protein DSP1 (Dsp1).